The sequence spans 195 residues: Transcriptional regulator GfcR (195 aa).

Belongs to the purine/pyrimidine phosphoribosyltransferase family. GfcR subfamily.

The chain is Transcriptional regulator GfcR from Picrophilus torridus (strain ATCC 700027 / DSM 9790 / JCM 10055 / NBRC 100828 / KAW 2/3).